A 166-amino-acid polypeptide reads, in one-letter code: MKYTSYFLALLLCVLLGFSGSYGQGQFFREIENLKEYFNASSPDVAKGGPLFSEILKNWKDESDKKIIQSQIVSFYFKLFENLKDNQVIQRSMDIIKQDMFQKFLNGSSEKPEDFKKLIQIPVDDLQIQRKAINELIKVMNDLSPKSNLRKRKRSQNLFRGRRASM.

An N-terminal signal peptide occupies residues 1-23 (MKYTSYFLALLLCVLLGFSGSYG). A Pyrrolidone carboxylic acid modification is found at glutamine 24. Asparagine 39 and asparagine 106 each carry an N-linked (GlcNAc...) asparagine glycan.

The protein belongs to the type II (or gamma) interferon family. Homodimer. Interacts with IFNGR1 (via extracellular domain); this interaction promotes IFNGR1 dimerization. In terms of tissue distribution, released primarily from activated T lymphocytes.

The protein localises to the secreted. Its function is as follows. Type II interferon produced by immune cells such as T-cells and NK cells that plays crucial roles in antimicrobial, antiviral, and antitumor responses by activating effector immune cells and enhancing antigen presentation. Primarily signals through the JAK-STAT pathway after interaction with its receptor IFNGR1 to affect gene regulation. Upon IFNG binding, IFNGR1 intracellular domain opens out to allow association of downstream signaling components JAK2, JAK1 and STAT1, leading to STAT1 activation, nuclear translocation and transcription of IFNG-regulated genes. Many of the induced genes are transcription factors such as IRF1 that are able to further drive regulation of a next wave of transcription. Plays a role in class I antigen presentation pathway by inducing a replacement of catalytic proteasome subunits with immunoproteasome subunits. In turn, increases the quantity, quality, and repertoire of peptides for class I MHC loading. Increases the efficiency of peptide generation also by inducing the expression of activator PA28 that associates with the proteasome and alters its proteolytic cleavage preference. Up-regulates as well MHC II complexes on the cell surface by promoting expression of several key molecules such as cathepsins B/CTSB, H/CTSH, and L/CTSL. Participates in the regulation of hematopoietic stem cells during development and under homeostatic conditions by affecting their development, quiescence, and differentiation. In Bos indicus (Zebu), this protein is Interferon gamma (IFNG).